Reading from the N-terminus, the 976-residue chain is Vacuolar membrane protease (976 aa).

At 1–15 (MKLKSVFRSVLKYRK) the chain is on the cytoplasmic side. The helical transmembrane segment at 16–36 (TNLSLLLLITYSIITLLYIFD) threads the bilayer. The Vacuolar portion of the chain corresponds to 37-359 (HERYKLNLPK…KFFVISAKTL (323 aa)). Residues asparagine 96 and asparagine 121 are each glycosylated (N-linked (GlcNAc...) asparagine). Zn(2+) contacts are provided by histidine 156 and aspartate 168. N-linked (GlcNAc...) asparagine glycosylation occurs at asparagine 189. The active-site Proton acceptor is the glutamate 200. Glutamate 201 contacts Zn(2+). Asparagine 212 and asparagine 217 each carry an N-linked (GlcNAc...) asparagine glycan. Zn(2+)-binding residues include glutamate 226 and histidine 300. The helical transmembrane segment at 360-380 (FYWNCIFLLVSPVVAIGLYLI) threads the bilayer. At 381–392 (SRDRMTWKSHSW) the chain is on the cytoplasmic side. The helical transmembrane segment at 393-412 (LSWTRFPLSLAAGIIVQKLF) threads the bilayer. Residues 413–428 (SNDIIRSNPLTFSRNY) are Vacuolar-facing. Residues 429-449 (FWPISAFFTQVIFTSYVLINC) form a helical membrane-spanning segment. The Cytoplasmic segment spans residues 450-461 (SNFFFPCADMKS). A helical membrane pass occupies residues 462-482 (LSIIELFIILWTILLFTSKLL). Residues 483-496 (YSSDYRYTGLYPLS) lie on the Vacuolar side of the membrane. Residues 497 to 517 (IFFLLSTIAAILRLLALALGM) form a helical membrane-spanning segment. The Cytoplasmic segment spans residues 518–627 (RTRKRLGREC…NSLKLEYTDY (110 aa)). The segment at 528–610 (RDHHSNYSSH…PLLKGSNSME (83 aa)) is disordered. The span at 549–558 (NLEQPQDQFT) shows a compositional bias: polar residues. A compositionally biased stretch (low complexity) spans 559–570 (SSQDDQASIQDD). Residues 582 to 601 (NVDEDHGMDSSSQQHDERVP) show a composition bias toward basic and acidic residues. A helical transmembrane segment spans residues 628–648 (AWIIQFLLIVPIPSFILFNSV). Over 649 to 668 (DVIMDALNHTVQEGSKATFD) the chain is Vacuolar. N-linked (GlcNAc...) asparagine glycosylation occurs at asparagine 656. Residues 669–689 (VLRFGMVGSILMALPILPFFY) traverse the membrane as a helical segment. Topologically, residues 690–692 (KVN) are cytoplasmic. A helical transmembrane segment spans residues 693 to 713 (YITISLTALLFLISASKTLLV). Residues 714–976 (HPFTNSNPLK…LVIVKDAIIL (263 aa)) lie on the Vacuolar side of the membrane. N-linked (GlcNAc...) asparagine glycans are attached at residues asparagine 768, asparagine 796, asparagine 811, asparagine 866, and asparagine 937.

It belongs to the peptidase M28 family. The cofactor is Zn(2+).

It localises to the vacuole membrane. May be involved in vacuolar sorting and osmoregulation. This Saccharomyces cerevisiae (strain Lalvin EC1118 / Prise de mousse) (Baker's yeast) protein is Vacuolar membrane protease.